Reading from the N-terminus, the 603-residue chain is Elongation factor 4 (603 aa).

The tr-type G domain occupies 7 to 189 (SRIRNFSIIA…SIVHLVPPPQ (183 aa)). GTP-binding positions include 19-24 (DHGKST) and 136-139 (NKID).

This sequence belongs to the TRAFAC class translation factor GTPase superfamily. Classic translation factor GTPase family. LepA subfamily.

It localises to the cell inner membrane. The enzyme catalyses GTP + H2O = GDP + phosphate + H(+). Required for accurate and efficient protein synthesis under certain stress conditions. May act as a fidelity factor of the translation reaction, by catalyzing a one-codon backward translocation of tRNAs on improperly translocated ribosomes. Back-translocation proceeds from a post-translocation (POST) complex to a pre-translocation (PRE) complex, thus giving elongation factor G a second chance to translocate the tRNAs correctly. Binds to ribosomes in a GTP-dependent manner. This chain is Elongation factor 4, found in Cyanothece sp. (strain PCC 7425 / ATCC 29141).